The chain runs to 385 residues: MELGKSIENHNDVVVRLTKHVIATVANGSNLVFSPISINVLLSLIAAGSCSVTKEQILSFLMLPSTDHLNLVLAQIIDGGTEKSDLRLSIANGVWIDKFFSLKLSFKDLLENSYKATCSQVDFASKPSEVIDEVNTWAEVHTNGLIKQILSRDSIDTIRSSTLVLANAVYFKGAWSSKFDANMTKKNDFHLLDGTSVKVPFMTNYEDQYLRSYDGFKVLRLPYIEDQRQFSMYIYLPNDKEGLAPLLEKIGSEPSFFDNHIPLHCISVGAFRIPKFKFSFEFNASEVLKDMGLTSPFNNGGGLTEMVDSPSNGDDLYVSSILHKACIEVDEEGTEAAAVSVGVVSCTSFRRNPDFVADRPFLFTVREDKSGVILFMGQVLDPSKH.

The tract at residues 333–357 (GTEAAAVSVGVVSCTSFRRNPDFVA) is RCL.

It belongs to the serpin family.

In terms of biological role, probable serine protease inhibitor. The protein is Serpin-Z10 of Arabidopsis thaliana (Mouse-ear cress).